A 652-amino-acid polypeptide reads, in one-letter code: Apicoplast pyruvate carrier 2 (652 aa).

Over 1 to 45 (MSAFPASPQPSAFPASPQPSAFPASPQPSASPVSPRHCVSPSSGT) the chain is Cytoplasmic. The interval 1–53 (MSAFPASPQPSAFPASPQPSAFPASPQPSASPVSPRHCVSPSSGTLPSSSSPS) is disordered. Transmembrane regions (helical) follow at residues 46–66 (LPSS…SSSS), 126–146 (NLLP…AVSY), 167–187 (GTTL…SAWM), 189–209 (LGLA…IAYG), 212–232 (TALG…KLSP), 278–298 (LPYL…SSLN), 345–365 (LVDP…AERQ), 385–405 (SCSA…ICSS), 417–437 (LSWQ…LYPE), 445–465 (AAPA…PRAL), 467–487 (SASR…SLTG), and 515–535 (LWGY…MNAL). Topologically, residues 536–652 (TAPCLFALST…LPYRFPTYSP (117 aa)) are cytoplasmic.

This sequence belongs to the major facilitator superfamily. In terms of assembly, interacts with apicoplast pyruvate carrier 1.

The protein localises to the plastid. It localises to the apicoplast. Its subcellular location is the membrane. Its function is as follows. Along with apicoplast pyruvate carrier 1, forms apicoplast pyruvate carrier (APC) complex, which transports pyruvate into the apicoplast and may also transport amino acids like methionine, serine, glycine and tryptophan with low efficiency. Required for maintaining pyruvate-dependent metabolic activities in the apicoplast, such as synthesis of fatty acids, isopentenyl pyrophosphate (IPP), dimethylallyl pyrophosphate (DMAPP) and methylerythritol 4-phosphate (MEP). Required for maintaining the integrity of the apicoplast. Required for normal parasite growth. The chain is Apicoplast pyruvate carrier 2 from Toxoplasma gondii.